The following is a 343-amino-acid chain: MKTHERAANLALAGLSLAPLVVKVNPNANVILTACLAVYVGCYRSVKPTPPAETMSKEHAMRFPLVGSAMLLSLFLLFKFLSKDLVNTVLTAYFFILGIAALCATLLPSIKRFLPKEWNDNAIVWRAPLFHSLSVEFTRSQVVASIPGFFFCIWYAAKKHWLANNVLGISFCIQGIEMLSLGSFKTGAILLSGLFFYDIFWVFFTPVMVSVAKSFDAPIKLLFPTGDAARPFSMLGLGDIVIPGIFVALALRFDVSRGIKNRYFNSAFLGYTVGLTVTIIVMNWFQAAQPALLYIVPGVIGFVAVHCLWNGEVKPLLEYNESKAEEEEACEEDTDSKQNKKKE.

At M1–P19 the chain is on the lumenal side. Residues L20–V40 traverse the membrane as a helical segment. The Cytoplasmic portion of the chain corresponds to G41–R62. Residues F63–K83 form a helical membrane-spanning segment. Topologically, residues D84–V89 are lumenal. Residues L90 to I110 traverse the membrane as a helical segment. Residues K111–Q141 lie on the Cytoplasmic side of the membrane. The chain crosses the membrane as a helical span at residues V142 to L162. At A163 to N165 the chain is on the lumenal side. Residues V166 to T186 form a helical membrane-spanning segment. At G187 to A188 the chain is on the cytoplasmic side. The chain crosses the membrane as a helical span at residues I189–V209. D198 is an active-site residue. Residues S210–R230 lie on the Lumenal side of the membrane. Residues P231–L251 form a helical membrane-spanning segment. D239 is an active-site residue. At R252–S266 the chain is on the cytoplasmic side. A helical membrane pass occupies residues A267–A287. Residues A288–P290 lie on the Lumenal side of the membrane. Residues P290–L292 carry the PAL motif. The helical transmembrane segment at A291–G311 threads the bilayer. Residues E312–E343 are Cytoplasmic-facing. Positions A324–T334 are enriched in acidic residues. Residues A324–E343 are disordered. The Endoplasmic reticulum targeting signal motif lies at K340–E343.

Belongs to the peptidase A22B family. As to expression, ubiquitous.

Its subcellular location is the endoplasmic reticulum membrane. Functionally, intramembrane-cleaving aspartic protease (I-CLiP) that cleaves type II membrane signal peptides in the hydrophobic plane of the membrane. Catalyzes intramembrane proteolysis of some signal peptides after they have been cleaved from a preprotein, resulting in the release of the fragment from the ER membrane into the cytoplasm. This is Signal peptide peptidase 2 (SPP2) from Oryza sativa subsp. japonica (Rice).